The chain runs to 93 residues: UPF0367 protein gsr3177 (93 aa).

It belongs to the UPF0367 family.

This is UPF0367 protein gsr3177 from Gloeobacter violaceus (strain ATCC 29082 / PCC 7421).